Reading from the N-terminus, the 851-residue chain is Probable disease resistance protein At1g15890 (851 aa).

Positions Ala139–Asp441 constitute an NB-ARC domain. An ATP-binding site is contributed by Gly181–Thr188. LRR repeat units lie at residues Ser514 to Pro535, Asn536 to Phe557, Ala560 to Leu582, Ser584 to Leu605, and Lys607 to Leu629.

The protein belongs to the disease resistance NB-LRR family.

Functionally, probable disease resistance protein. In Arabidopsis thaliana (Mouse-ear cress), this protein is Probable disease resistance protein At1g15890.